Here is an 834-residue protein sequence, read N- to C-terminus: Kinesin-like protein KIF18B (834 aa).

A Kinesin motor domain is found at 9 to 353 (VVRVVVRVRP…LKYADRAKEI (345 aa)). 111–118 (GATGAGKT) contacts ATP. Residues 368 to 404 (ISQYATICQQLQAEVAFLREKLQMYEAGAQALQQQCS) adopt a coiled-coil conformation. Disordered stretches follow at residues 400 to 508 (QQQC…ADHS), 602 to 642 (LGAP…NLEM), 655 to 686 (RGSL…RVCP), and 800 to 834 (KKPN…TESY). A compositionally biased stretch (low complexity) spans 411-432 (SIPQSLSSSSLQPGPSSQSSTL). Threonine 431 carries the post-translational modification Phosphothreonine. Residues 462–474 (EQEQCPQDKQCPT) are compositionally biased toward polar residues. Residue serine 484 is modified to Phosphoserine. The span at 611 to 620 (TSDKTFQKPT) shows a compositional bias: basic and acidic residues. The short motif at 619-627 (PTKEKKRKL) is the Nuclear localization signal element. A phosphoserine mark is found at serine 634 and serine 657. At threonine 669 the chain carries Phosphothreonine. Serine 814 carries the phosphoserine modification.

This sequence belongs to the TRAFAC class myosin-kinesin ATPase superfamily. Kinesin family. As to quaternary structure, interacts with MAPRE1; this interaction is required for efficient accumulation at microtubule plus ends. Interacts with KIF2C at microtubule tips; this interaction increases the affinity of both partners for microtubule plus ends and is required for robust microtubule depolymerization. KIF2C phosphorylation by AURKA or AURKB strongly reduces KIF18B-binding.

The protein localises to the nucleus. The protein resides in the cytoplasm. Its subcellular location is the cytoskeleton. In complex with KIF2C, constitutes the major microtubule plus-end depolymerizing activity in mitotic cells. Its major role may be to transport KIF2C and/or MAPRE1 along microtubules. This chain is Kinesin-like protein KIF18B (Kif18b), found in Mus musculus (Mouse).